Consider the following 98-residue polypeptide: uncharacterized protein (98 aa).

The N-terminal stretch at 1 to 19 (MTERRRALSLAAVVDSINL) is a signal peptide. Residues 40 to 98 (PPGGSFSGIKRESRRKRPSRNEIYGGGVLEQEVRMRRWSKTASPPVSLHHRPLGPARKP) form a disordered region. Positions 87-98 (LHHRPLGPARKP) are enriched in basic residues.

This is an uncharacterized protein from Homo sapiens (Human).